We begin with the raw amino-acid sequence, 436 residues long: 3-ketoacyl-CoA thiolase (436 aa).

Cys-99 (acyl-thioester intermediate) is an active-site residue. Residues His-392 and Cys-422 each act as proton acceptor in the active site.

It belongs to the thiolase-like superfamily. Thiolase family. Heterotetramer of two alpha chains (FadJ) and two beta chains (FadI).

It localises to the cytoplasm. The catalysed reaction is an acyl-CoA + acetyl-CoA = a 3-oxoacyl-CoA + CoA. Its pathway is lipid metabolism; fatty acid beta-oxidation. Its function is as follows. Catalyzes the final step of fatty acid oxidation in which acetyl-CoA is released and the CoA ester of a fatty acid two carbons shorter is formed. This chain is 3-ketoacyl-CoA thiolase, found in Shewanella loihica (strain ATCC BAA-1088 / PV-4).